Reading from the N-terminus, the 642-residue chain is Threonine--tRNA ligase (642 aa).

Residues 1–61 enclose the TGS domain; the sequence is MPVITLPDGS…ENDAQLSIIT (61 aa). The interval 243-534 is catalytic; that stretch reads DHRKIGKQLD…LTEEFAGFFP (292 aa). Lys286 is modified (N6-acetyllysine). Residues Cys334, His385, and His511 each contribute to the Zn(2+) site.

This sequence belongs to the class-II aminoacyl-tRNA synthetase family. In terms of assembly, homodimer. It depends on Zn(2+) as a cofactor.

It localises to the cytoplasm. It catalyses the reaction tRNA(Thr) + L-threonine + ATP = L-threonyl-tRNA(Thr) + AMP + diphosphate + H(+). Its function is as follows. Catalyzes the attachment of threonine to tRNA(Thr) in a two-step reaction: L-threonine is first activated by ATP to form Thr-AMP and then transferred to the acceptor end of tRNA(Thr). Also edits incorrectly charged L-seryl-tRNA(Thr). This Shigella flexneri serotype 5b (strain 8401) protein is Threonine--tRNA ligase.